The following is a 169-amino-acid chain: E1B protein, small T-antigen (169 aa).

This sequence belongs to the adenoviridae E1B 19 kDa protein family.

The chain is E1B protein, small T-antigen from Canis lupus familiaris (Dog).